We begin with the raw amino-acid sequence, 436 residues long: 23S rRNA (uracil(1939)-C(5))-methyltransferase RlmD (436 aa).

The TRAM domain maps to 10–68 (KQKTTQKIVAEIQDLDYQGLGVAKIQGKTWFIENALPTEKVEAVVTDEKRQYGLATAQK). The [4Fe-4S] cluster site is built by C81, C87, C90, and C168. S-adenosyl-L-methionine contacts are provided by Q270, F299, N304, E320, D347, and D368. The active-site Nucleophile is the C394.

The protein belongs to the class I-like SAM-binding methyltransferase superfamily. RNA M5U methyltransferase family. RlmD subfamily.

It catalyses the reaction uridine(1939) in 23S rRNA + S-adenosyl-L-methionine = 5-methyluridine(1939) in 23S rRNA + S-adenosyl-L-homocysteine + H(+). Catalyzes the formation of 5-methyl-uridine at position 1939 (m5U1939) in 23S rRNA. This is 23S rRNA (uracil(1939)-C(5))-methyltransferase RlmD from Haemophilus parainfluenzae (strain T3T1).